We begin with the raw amino-acid sequence, 190 residues long: dTTP/UTP pyrophosphatase (190 aa).

Asp70 serves as the catalytic Proton acceptor.

This sequence belongs to the Maf family. YhdE subfamily. A divalent metal cation is required as a cofactor.

Its subcellular location is the cytoplasm. The catalysed reaction is dTTP + H2O = dTMP + diphosphate + H(+). It catalyses the reaction UTP + H2O = UMP + diphosphate + H(+). Nucleoside triphosphate pyrophosphatase that hydrolyzes dTTP and UTP. May have a dual role in cell division arrest and in preventing the incorporation of modified nucleotides into cellular nucleic acids. The sequence is that of dTTP/UTP pyrophosphatase from Gloeobacter violaceus (strain ATCC 29082 / PCC 7421).